A 390-amino-acid chain; its full sequence is EF-hand calcium-binding domain-containing protein 4A (390 aa).

Residues 1 to 27 (MSPRSTLRSPLPSRTARSSASSDTPSP) are compositionally biased toward low complexity. The tract at residues 1–37 (MSPRSTLRSPLPSRTARSSASSDTPSPGADRQDRMSK) is disordered. EF-hand domains are found at residues 33 to 66 (DRMS…QELP) and 67 to 102 (LSPE…LVGS). Residues Asp80, Asp82, Asn84, Tyr86, and Glu91 each contribute to the Ca(2+) site. Positions 173-357 (SHLQDALKEK…DDKDAHQAQK (185 aa)) form a coiled coil. The segment at 206 to 234 (DMESQLKEERERRQALDSMRQGDKKEQLL) is disordered.

The protein belongs to the EFCAB4 family.

This Danio rerio (Zebrafish) protein is EF-hand calcium-binding domain-containing protein 4A (cracr2b).